Reading from the N-terminus, the 2153-residue chain is RNA-directed RNA polymerase L (2153 aa).

The Mn(2+) site is built by His36, Glu54, Asp97, Glu110, and Val111. Residue Lys124 is the For endonuclease activity of the active site. Positions 957–1143 (TGNVIKFKRR…AVNQEMWKSM (187 aa)) constitute a RdRp catalytic domain. Asp1100 is a binding site for Mg(2+). The segment at 1291 to 2153 (KQAFYSYKHT…FPHDPVSSFY (863 aa)) is interaction with the viral nucleoprotein.

The protein belongs to the Bunyavirales RNA polymerase family. As to quaternary structure, interacts with the viral nucleoprotein; this interaction is required for RdRp function. It depends on Mn(2+) as a cofactor. Mg(2+) is required as a cofactor.

It is found in the host cytoplasm. It localises to the host perinuclear region. It catalyses the reaction RNA(n) + a ribonucleoside 5'-triphosphate = RNA(n+1) + diphosphate. Functionally, RNA-dependent RNA polymerase, which is responsible for the replication and transcription of the viral RNA genome using antigenomic RNA as an intermediate. During transcription, synthesizes subgenomic RNAs and assures their capping by a cap-snatching mechanism, which involves the endonuclease activity cleaving the host capped pre-mRNAs. These short capped RNAs are then used as primers for viral transcription. Cleaves ssRNA substrates but not DNA. Seems to downregulate the expression of its own and heterologous mRNAs through its endonuclease activity. This is RNA-directed RNA polymerase L from Sin Nombre orthohantavirus (SNV).